Here is a 101-residue protein sequence, read N- to C-terminus: UPF0473 protein MGAS10750_Spy1887 (101 aa).

The protein belongs to the UPF0473 family.

This chain is UPF0473 protein MGAS10750_Spy1887, found in Streptococcus pyogenes serotype M4 (strain MGAS10750).